Here is a 223-residue protein sequence, read N- to C-terminus: Bone marrow proteoglycan (223 aa).

Positions 1 to 16 (MKFPLLLALLVGGASA) are cleaved as a signal peptide. A propeptide spans 17–106 (LHLSSETSDS…TSLMGDSGCK (90 aa)) (acidic). The segment at 20–81 (SSETSDSKSP…PGDEGAVSGQ (62 aa)) is disordered. Residue Thr-23 is glycosylated (O-linked (GalNAc...) threonine; partial). The O-linked (GalNAc...) serine glycan is linked to Ser-24. Ser-66 is a glycosylation site (O-linked (Xyl...) (chondroitin sulfate) serine). Positions 124-223 (SVCRRCYRGT…VKRRPFICSY (100 aa)) constitute a C-type lectin domain. 2 disulfides stabilise this stretch: Cys-126–Cys-221 and Cys-198–Cys-213.

Nitrated.

The protein localises to the secreted. In terms of biological role, cytotoxin and helminthotoxin. MBP also induces non-cytolytic histamine release from basophils. It is involved in antiparasitic defense mechanisms and immune hypersensitivity reactions. The protein is Bone marrow proteoglycan (Prg2) of Mus musculus (Mouse).